Reading from the N-terminus, the 305-residue chain is Cysteine synthase (305 aa).

N6-(pyridoxal phosphate)lysine is present on K45. Pyridoxal 5'-phosphate contacts are provided by residues N75, 179 to 183 (GSGGT), and S266.

It belongs to the cysteine synthase/cystathionine beta-synthase family. In terms of assembly, homodimer. Requires pyridoxal 5'-phosphate as cofactor.

The enzyme catalyses O-acetyl-L-serine + hydrogen sulfide = L-cysteine + acetate. It functions in the pathway amino-acid biosynthesis; L-cysteine biosynthesis; L-cysteine from L-serine: step 2/2. The chain is Cysteine synthase (cysM) from Helicobacter pylori (strain J99 / ATCC 700824) (Campylobacter pylori J99).